Consider the following 286-residue polypeptide: ATP synthase gamma chain (286 aa).

It belongs to the ATPase gamma chain family. In terms of assembly, F-type ATPases have 2 components, CF(1) - the catalytic core - and CF(0) - the membrane proton channel. CF(1) has five subunits: alpha(3), beta(3), gamma(1), delta(1), epsilon(1). CF(0) has three main subunits: a, b and c.

It is found in the cell inner membrane. Produces ATP from ADP in the presence of a proton gradient across the membrane. The gamma chain is believed to be important in regulating ATPase activity and the flow of protons through the CF(0) complex. In Pseudomonas putida (strain W619), this protein is ATP synthase gamma chain.